The sequence spans 261 residues: Cytochrome c oxidase subunit 3 (261 aa).

The Mitochondrial matrix portion of the chain corresponds to 1-15; that stretch reads MAHQAHAYHMVDPSP. Residues 16 to 34 traverse the membrane as a helical segment; that stretch reads WPLTGAIGALFLTSGLAIW. Topologically, residues 35–40 are mitochondrial intermembrane; sequence FHFQSV. Residues 41–66 traverse the membrane as a helical segment; sequence TLLTLGLILLLLTMYQWWRDIIREGT. At 67-72 the chain is on the mitochondrial matrix side; the sequence is FQGHHT. The helical transmembrane segment at 73 to 105 threads the bilayer; it reads PPVQKGLRYGMILFITSEVFFFLGFFWAFYHSS. Residues 106-128 lie on the Mitochondrial intermembrane side of the membrane; that stretch reads LAPTPELGGCWPPTGITPLDPFE. Residues 129 to 152 traverse the membrane as a helical segment; that stretch reads VPLLNTAVLLASGVTVTWAHHSLM. Residues 153–155 are Mitochondrial matrix-facing; sequence EGA. A helical membrane pass occupies residues 156 to 183; the sequence is RKQAIQALALTIILGVYFTALQAMEYYE. Residues 184-190 lie on the Mitochondrial intermembrane side of the membrane; sequence APFTIAD. The helical transmembrane segment at 191–223 threads the bilayer; it reads GVYGSTFFVATGFHGLHVIIGSSFLAVCLLRQI. The Mitochondrial matrix segment spans residues 224 to 232; sequence QYHFTSEHH. Residues 233 to 256 traverse the membrane as a helical segment; sequence FGFEAAAWYWHFVDVVWLFLYVSI. Residues 257–261 lie on the Mitochondrial intermembrane side of the membrane; it reads YWWGS.

The protein belongs to the cytochrome c oxidase subunit 3 family. Component of the cytochrome c oxidase (complex IV, CIV), a multisubunit enzyme composed of 14 subunits. The complex is composed of a catalytic core of 3 subunits MT-CO1, MT-CO2 and MT-CO3, encoded in the mitochondrial DNA, and 11 supernumerary subunits COX4I, COX5A, COX5B, COX6A, COX6B, COX6C, COX7A, COX7B, COX7C, COX8 and NDUFA4, which are encoded in the nuclear genome. The complex exists as a monomer or a dimer and forms supercomplexes (SCs) in the inner mitochondrial membrane with NADH-ubiquinone oxidoreductase (complex I, CI) and ubiquinol-cytochrome c oxidoreductase (cytochrome b-c1 complex, complex III, CIII), resulting in different assemblies (supercomplex SCI(1)III(2)IV(1) and megacomplex MCI(2)III(2)IV(2)).

Its subcellular location is the mitochondrion inner membrane. It catalyses the reaction 4 Fe(II)-[cytochrome c] + O2 + 8 H(+)(in) = 4 Fe(III)-[cytochrome c] + 2 H2O + 4 H(+)(out). Functionally, component of the cytochrome c oxidase, the last enzyme in the mitochondrial electron transport chain which drives oxidative phosphorylation. The respiratory chain contains 3 multisubunit complexes succinate dehydrogenase (complex II, CII), ubiquinol-cytochrome c oxidoreductase (cytochrome b-c1 complex, complex III, CIII) and cytochrome c oxidase (complex IV, CIV), that cooperate to transfer electrons derived from NADH and succinate to molecular oxygen, creating an electrochemical gradient over the inner membrane that drives transmembrane transport and the ATP synthase. Cytochrome c oxidase is the component of the respiratory chain that catalyzes the reduction of oxygen to water. Electrons originating from reduced cytochrome c in the intermembrane space (IMS) are transferred via the dinuclear copper A center (CU(A)) of subunit 2 and heme A of subunit 1 to the active site in subunit 1, a binuclear center (BNC) formed by heme A3 and copper B (CU(B)). The BNC reduces molecular oxygen to 2 water molecules using 4 electrons from cytochrome c in the IMS and 4 protons from the mitochondrial matrix. The chain is Cytochrome c oxidase subunit 3 (mt-co3) from Formosania lacustris (Oriental stream loach).